The chain runs to 248 residues: Probable transcriptional regulatory protein R02753 (248 aa).

This sequence belongs to the TACO1 family.

It is found in the cytoplasm. This Rhizobium meliloti (strain 1021) (Ensifer meliloti) protein is Probable transcriptional regulatory protein R02753.